We begin with the raw amino-acid sequence, 747 residues long: Zinc finger and BTB domain-containing protein 47 (747 aa).

The 69-residue stretch at 15 to 83 (CDVDLVLVPQ…IYTSKLLVNA (69 aa)) folds into the BTB domain. Lys-190 is covalently cross-linked (Glycyl lysine isopeptide (Lys-Gly) (interchain with G-Cter in SUMO2)). The segment at 243-424 (QTLHVSTGPE…ARGPPATDGL (182 aa)) is disordered. A compositionally biased stretch (basic and acidic residues) spans 267-277 (GREDGLQRHSD). A compositionally biased stretch (acidic residues) spans 278-354 (EEEEDDEEEE…SEEEEGEEGE (77 aa)). Basic and acidic residues predominate over residues 380-398 (RSRENARRRGTPEPEEAGR). The segment at 436 to 459 (HPCQKCPRVFNNRWYLEKHMNVTH) adopts a C2H2-type 1 zinc-finger fold. The C2H2-type 2; degenerate zinc-finger motif lies at 463–485 (QICDQCGKRFLLESELLLHRQTD). 7 C2H2-type zinc fingers span residues 490–513 (IQCVTCGKAFKKLWSLHEHNKIVH), 520–542 (FSCEICEKKFYTMAHVRKHMVAH), 548–570 (FTCETCGKSFKRSMSLKVHSLQH), 576–598 (FRCENCNERFQYKYQLRSHMSIH), 604–626 (FMCQWCGKDFNMKQYFDEHMKTH), 632–654 (YICEICGKSFTSRPNMKRHRRTH), and 660–687 (YPCDVCGQRFRFSNMLKAHKEKCFRVSH). The tract at residues 694-747 (VPAAPGLPPTQPQAHALPLLPGLPQTLPPPPHLPPPPPLFPTTASPGGRMNANN) is disordered. Pro residues predominate over residues 719-733 (TLPPPPHLPPPPPLF).

It belongs to the krueppel C2H2-type zinc-finger protein family.

The protein localises to the nucleus. Functionally, may be involved in transcriptional regulation. This is Zinc finger and BTB domain-containing protein 47 (ZBTB47) from Homo sapiens (Human).